Here is a 616-residue protein sequence, read N- to C-terminus: tRNA 5-methylaminomethyl-2-thiouridine biosynthesis bifunctional protein MnmC (616 aa).

The interval 1-232 (MLRTIVPARL…KRHCMSARFA (232 aa)) is tRNA (mnm(5)s(2)U34)-methyltransferase. The interval 249–616 (IGGGVAGAAA…ARFAGNRKTA (368 aa)) is FAD-dependent cmnm(5)s(2)U34 oxidoreductase.

This sequence in the N-terminal section; belongs to the methyltransferase superfamily. tRNA (mnm(5)s(2)U34)-methyltransferase family. The protein in the C-terminal section; belongs to the DAO family. Requires FAD as cofactor.

Its subcellular location is the cytoplasm. The enzyme catalyses 5-aminomethyl-2-thiouridine(34) in tRNA + S-adenosyl-L-methionine = 5-methylaminomethyl-2-thiouridine(34) in tRNA + S-adenosyl-L-homocysteine + H(+). In terms of biological role, catalyzes the last two steps in the biosynthesis of 5-methylaminomethyl-2-thiouridine (mnm(5)s(2)U) at the wobble position (U34) in tRNA. Catalyzes the FAD-dependent demodification of cmnm(5)s(2)U34 to nm(5)s(2)U34, followed by the transfer of a methyl group from S-adenosyl-L-methionine to nm(5)s(2)U34, to form mnm(5)s(2)U34. The protein is tRNA 5-methylaminomethyl-2-thiouridine biosynthesis bifunctional protein MnmC of Thiobacillus denitrificans (strain ATCC 25259 / T1).